An 814-amino-acid chain; its full sequence is Glycosyltransferase GlyD (814 aa).

Residues 1–264 are GT8 domain; it reads MNKTIVLAGD…SQILQHHMGE (264 aa). Residues 8–13 and 102–103 contribute to the UDP site; these read AGDRNY and DS. Asp102, Asp104, and His226 together coordinate Mn(2+). Position 226-232 (226-232) interacts with UDP; it reads HFTTYRK. The GT-D domain stretch occupies residues 542-814; that stretch reads EKPLDIIQVK…NSQIVARILN (273 aa).

This sequence in the N-terminal section; belongs to the glycosyltransferase 8 family. In the C-terminal section; belongs to the GT-D family.

It participates in protein modification; protein glycosylation. Its function is as follows. Involved in the polymorphic O-glycosylation of the serine-rich repeat protein PsrP. Catalyzes the third step in glycosylation PsrP in this bacteria. Transfers glucose from UDP-glucose to the terminal glucose moiety of already-glycosylated PsrP (using truncated substrates with PsrP SSR1-GlcNAc-Glc); the C-terminal GT-D domain is sufficient for this reaction in vitro. Also transfers galactose from UDP-galactose to the terminal glucose moiety of already-glycosylated PsrP; the C-terminal GT-D domain is also sufficient for this reaction in vitro. Activity is much higher with UDP-glucose, and the enzyme has a very marked preference for PsrP substrate that has already been modified by GlcNAc and glucose. In vitro has hydrolytic activity against UDP-galactose and to a lesser extent against UDP-glucose. Functionally, also catalyzes the fourth step in glycosylation of PsrP in this bacteria. Can transfer the sugar from both UDP-glucose and UDP-galactose to the terminal sugar moiety of PsrP-GlcNAc-Glc-Glc and PsrP-GlcNAc-Glc-Gal; the C-terminal GT-D domain is also sufficient for this reaction in vitro (using truncated substrates with glycosylated PsrP SSR1). The N-terminal GT-D domain can transfer galactose from UDP-galactose to PsrP-GlcNAc-Glc-Gal or PsrP-GlcNAc-Glc-Glc in the fourth step. This chain is Glycosyltransferase GlyD, found in Streptococcus pneumoniae serotype 4 (strain ATCC BAA-334 / TIGR4).